The primary structure comprises 484 residues: Glutamyl-tRNA(Gln) amidotransferase subunit A (484 aa).

Active-site charge relay system residues include Lys-76 and Ser-151. The active-site Acyl-ester intermediate is the Ser-175.

Belongs to the amidase family. GatA subfamily. As to quaternary structure, heterotrimer of A, B and C subunits.

The enzyme catalyses L-glutamyl-tRNA(Gln) + L-glutamine + ATP + H2O = L-glutaminyl-tRNA(Gln) + L-glutamate + ADP + phosphate + H(+). Its function is as follows. Allows the formation of correctly charged Gln-tRNA(Gln) through the transamidation of misacylated Glu-tRNA(Gln) in organisms which lack glutaminyl-tRNA synthetase. The reaction takes place in the presence of glutamine and ATP through an activated gamma-phospho-Glu-tRNA(Gln). This is Glutamyl-tRNA(Gln) amidotransferase subunit A from Alkalilimnicola ehrlichii (strain ATCC BAA-1101 / DSM 17681 / MLHE-1).